The primary structure comprises 708 residues: FACT complex subunit SSRP1 (708 aa).

N-acetylalanine is present on alanine 2. Residue lysine 90 forms a Glycyl lysine isopeptide (Lys-Gly) (interchain with G-Cter in SUMO2) linkage. Threonine 170 is modified (phosphothreonine). Lysine 233 is subject to N6-acetyllysine. Glycyl lysine isopeptide (Lys-Gly) (interchain with G-Cter in SUMO2) cross-links involve residues lysine 296 and lysine 364. At lysine 413 the chain carries N6-acetyllysine. A Phosphotyrosine modification is found at tyrosine 441. Serine 444 carries the post-translational modification Phosphoserine. Tyrosine 452 is subject to Phosphotyrosine. A disordered region spans residues 458 to 708 (EEGKIREENA…SEDSASGSDE (251 aa)). The span at 470–496 (SSDDSGEETDESFNPGEEEEDVAEEFD) shows a compositional bias: acidic residues. Serine 471 carries the phosphoserine modification. Residues 497–507 (SNASASSSSNE) are compositionally biased toward low complexity. Residue serine 510 is modified to Phosphoserine; by CK2. Composition is skewed to basic and acidic residues over residues 512–546 (REEKKREQLKRAKMAKDRKSRRKSSEAKKGKDPNA) and 577–624 (LSKK…SSKR). Lysine 542 carries the N6-acetyllysine modification. The HMG box DNA-binding region spans 547–615 (PKRPMSAYML…EYEKAMKEYE (69 aa)). The segment covering 625–634 (DKSKKKKKVK) has biased composition (basic residues). A compositionally biased stretch (low complexity) spans 643–659 (PSRGSSSKSSSRQLSDS). Serine 657 carries the phosphoserine; by CK2 modification. A phosphoserine mark is found at serine 659, serine 667, serine 668, serine 671, serine 672, and serine 673. Serine 688 carries the post-translational modification Phosphoserine; by CK2. Polar residues predominate over residues 695–708 (TPPSSEDSASGSDE).

Belongs to the SSRP1 family. In terms of assembly, interacts with MYOG (via C-terminal region). Component of the FACT complex, a stable heterodimer of SSRP1 and SUPT16H. Also a component of a CK2-SPT16-SSRP1 complex which forms following UV irradiation, composed of SSRP1, SUPT16H, CSNK2A1, CSNK2A2 and CSNK2B. Binds to histone H3-H4 tetramers, but not to intact nucleosomes. Identified in a centromere complex containing histones H2A, H2B and H4, and at least CENPA, CENPB, CENPC, CENPT, CENPN, HJURP, SUPT16H, SSRP1 and RSF1. Interacts with isoform gamma of TP63. Interacts with FYTTD1/UIF. Interacts with SRF. Interacts with NEK9. Post-translationally, phosphorylated by CK2 following UV but not gamma irradiation. Phosphorylation inhibits its DNA-binding activity. In terms of processing, ubiquitinated. Polyubiquitinated following caspase cleavage resulting in degradation of the N-terminal ubiquitinated part of the cleaved protein. Sumoylated.

It localises to the nucleus. The protein resides in the chromosome. The protein localises to the nucleolus. Functionally, component of the FACT complex, a general chromatin factor that acts to reorganize nucleosomes. The FACT complex is involved in multiple processes that require DNA as a template such as mRNA elongation, DNA replication and DNA repair. During transcription elongation the FACT complex acts as a histone chaperone that both destabilizes and restores nucleosomal structure. It facilitates the passage of RNA polymerase II and transcription by promoting the dissociation of one histone H2A-H2B dimer from the nucleosome, then subsequently promotes the reestablishment of the nucleosome following the passage of RNA polymerase II. The FACT complex is probably also involved in phosphorylation of 'Ser-392' of p53/TP53 via its association with CK2 (casein kinase II). Binds specifically to double-stranded DNA. Also acts as a transcriptional coactivator for p63/TP63. This Mus musculus (Mouse) protein is FACT complex subunit SSRP1 (Ssrp1).